The sequence spans 360 residues: Peptide chain release factor 1 (360 aa).

N5-methylglutamine is present on glutamine 235.

The protein belongs to the prokaryotic/mitochondrial release factor family. Methylated by PrmC. Methylation increases the termination efficiency of RF1.

It localises to the cytoplasm. Peptide chain release factor 1 directs the termination of translation in response to the peptide chain termination codons UAG and UAA. In Burkholderia pseudomallei (strain 1106a), this protein is Peptide chain release factor 1.